An 860-amino-acid polypeptide reads, in one-letter code: Leucine--tRNA ligase (860 aa).

Positions 42–52 match the 'HIGH' region motif; sequence PYPSGRLHMGH. The short motif at 619–623 is the 'KMSKS' region element; that stretch reads KMSKS. An ATP-binding site is contributed by lysine 622.

It belongs to the class-I aminoacyl-tRNA synthetase family.

It is found in the cytoplasm. It catalyses the reaction tRNA(Leu) + L-leucine + ATP = L-leucyl-tRNA(Leu) + AMP + diphosphate. This is Leucine--tRNA ligase from Salmonella paratyphi B (strain ATCC BAA-1250 / SPB7).